The sequence spans 92 residues: Small ribosomal subunit protein uS19 (92 aa).

Protein S19 forms a complex with S13 that binds strongly to the 16S ribosomal RNA. This Rhodopseudomonas palustris (strain ATCC BAA-98 / CGA009) protein is Small ribosomal subunit protein uS19.